The chain runs to 469 residues: 3-isopropylmalate dehydratase large subunit (469 aa).

[4Fe-4S] cluster contacts are provided by Cys349, Cys410, and Cys413.

It belongs to the aconitase/IPM isomerase family. LeuC type 1 subfamily. Heterodimer of LeuC and LeuD. The cofactor is [4Fe-4S] cluster.

The enzyme catalyses (2R,3S)-3-isopropylmalate = (2S)-2-isopropylmalate. The protein operates within amino-acid biosynthesis; L-leucine biosynthesis; L-leucine from 3-methyl-2-oxobutanoate: step 2/4. Functionally, catalyzes the isomerization between 2-isopropylmalate and 3-isopropylmalate, via the formation of 2-isopropylmaleate. The sequence is that of 3-isopropylmalate dehydratase large subunit from Neisseria meningitidis serogroup C / serotype 2a (strain ATCC 700532 / DSM 15464 / FAM18).